We begin with the raw amino-acid sequence, 438 residues long: 23S rRNA (uracil(1939)-C(5))-methyltransferase RlmD (438 aa).

The TRAM domain occupies 9 to 68 (RRTVNRHIITVTADNLDAQGQGVARHQGKTIFVAGLLPGEQAQVQLTEEKRQFAKAKLVK). Residues C81, C87, C90, and C168 each contribute to the [4Fe-4S] cluster site. Residues Q272, F301, N306, E322, N349, and D370 each coordinate S-adenosyl-L-methionine. Catalysis depends on C396, which acts as the Nucleophile.

It belongs to the class I-like SAM-binding methyltransferase superfamily. RNA M5U methyltransferase family. RlmD subfamily.

The catalysed reaction is uridine(1939) in 23S rRNA + S-adenosyl-L-methionine = 5-methyluridine(1939) in 23S rRNA + S-adenosyl-L-homocysteine + H(+). Catalyzes the formation of 5-methyl-uridine at position 1939 (m5U1939) in 23S rRNA. This chain is 23S rRNA (uracil(1939)-C(5))-methyltransferase RlmD, found in Photorhabdus laumondii subsp. laumondii (strain DSM 15139 / CIP 105565 / TT01) (Photorhabdus luminescens subsp. laumondii).